A 941-amino-acid polypeptide reads, in one-letter code: Ankyrin repeat and MYND domain-containing protein 1 (941 aa).

3 MORN repeats span residues 2–24 (YQGE…TGES), 25–47 (YHGQ…DGSS), and 70–92 (FQGL…DGSQ). ANK repeat units follow at residues 292-321 (KGYT…DVNK), 513-542 (MRRM…DPNL), 545-574 (VPMQ…RTDI), 581-613 (STLT…DVDA), 657-691 (GGRT…NPNL), 694-723 (SGHS…DPNL), and 737-766 (CDLT…DILK). 8 residues coordinate Zn(2+): Cys880, Cys883, Cys894, Cys897, Cys903, Cys907, His916, and Cys920. Residues 880–920 (CYQCGRSIGVRLLPCPRCYGILTCSKYCKTKAWTEFHKKDC) form an MYND-type zinc finger.

The polypeptide is Ankyrin repeat and MYND domain-containing protein 1 (ANKMY1) (Homo sapiens (Human)).